Here is a 176-residue protein sequence, read N- to C-terminus: MVTKPARMYSRITGPAYTRKEFMGGVPYPKITTFVQGNQKKDFPIEMRLVAEEPCQIRHTALEAARVSVNRRMTEAAGLDYFYLKVVPYPHHVLREHKMATGAGADRISSGMRAAFGRPVGTAARVYPDDVIMIARTDEAHAKELKTALRKAAIKLPTPCKVVITKGKEIAGSLGI.

Belongs to the universal ribosomal protein uL16 family.

The protein is Large ribosomal subunit protein uL16 of Thermoplasma acidophilum (strain ATCC 25905 / DSM 1728 / JCM 9062 / NBRC 15155 / AMRC-C165).